Reading from the N-terminus, the 302-residue chain is MKILFLGTPLYASRHLEALLSAGHMVIGVITQPDKPAGRGLRMVHSPVKDLALKNKIPVFESLKDFPFDRLTPDIGIVVAYGGLIKKKFLDLIPFGYYNIHPSLLPKYRGAAPINRALENGEKMTGVSLFKLTEKLDAGPIVLQVEISVDCFETFDSLENRMIEAGKKILCDFLKNPESFELREQDHSQASYAPKITPADLFVDFRKDSEAVKNKIRAYDSRPGARTFFHGEQVKLFGAVAIEKCHSGEPGTIVHIDDKGAYVTTSDGIIVISQIQFPSKKKMSFLSALNGRMLRVKDRFQS.

Residue 103–106 (SLLP) participates in (6S)-5,6,7,8-tetrahydrofolate binding.

Belongs to the Fmt family.

It carries out the reaction L-methionyl-tRNA(fMet) + (6R)-10-formyltetrahydrofolate = N-formyl-L-methionyl-tRNA(fMet) + (6S)-5,6,7,8-tetrahydrofolate + H(+). Its function is as follows. Attaches a formyl group to the free amino group of methionyl-tRNA(fMet). The formyl group appears to play a dual role in the initiator identity of N-formylmethionyl-tRNA by promoting its recognition by IF2 and preventing the misappropriation of this tRNA by the elongation apparatus. The protein is Methionyl-tRNA formyltransferase of Pseudothermotoga lettingae (strain ATCC BAA-301 / DSM 14385 / NBRC 107922 / TMO) (Thermotoga lettingae).